Here is a 175-residue protein sequence, read N- to C-terminus: Adenine phosphoribosyltransferase (175 aa).

The protein belongs to the purine/pyrimidine phosphoribosyltransferase family. Homodimer.

The protein resides in the cytoplasm. It catalyses the reaction AMP + diphosphate = 5-phospho-alpha-D-ribose 1-diphosphate + adenine. It participates in purine metabolism; AMP biosynthesis via salvage pathway; AMP from adenine: step 1/1. In terms of biological role, catalyzes a salvage reaction resulting in the formation of AMP, that is energically less costly than de novo synthesis. The sequence is that of Adenine phosphoribosyltransferase from Lactobacillus gasseri (strain ATCC 33323 / DSM 20243 / BCRC 14619 / CIP 102991 / JCM 1131 / KCTC 3163 / NCIMB 11718 / NCTC 13722 / AM63).